The sequence spans 402 residues: CCA-adding enzyme (402 aa).

Gly32 and Arg35 together coordinate ATP. 2 residues coordinate CTP: Gly32 and Arg35. 2 residues coordinate Mg(2+): Asp45 and Asp47. Residues Arg116, Asp159, Arg162, Arg165, and Arg168 each contribute to the ATP site. The CTP site is built by Arg116, Asp159, Arg162, Arg165, and Arg168.

The protein belongs to the tRNA nucleotidyltransferase/poly(A) polymerase family. Bacterial CCA-adding enzyme type 3 subfamily. Homodimer. Mg(2+) is required as a cofactor.

It catalyses the reaction a tRNA precursor + 2 CTP + ATP = a tRNA with a 3' CCA end + 3 diphosphate. The catalysed reaction is a tRNA with a 3' CCA end + 2 CTP + ATP = a tRNA with a 3' CCACCA end + 3 diphosphate. Its function is as follows. Catalyzes the addition and repair of the essential 3'-terminal CCA sequence in tRNAs without using a nucleic acid template. Adds these three nucleotides in the order of C, C, and A to the tRNA nucleotide-73, using CTP and ATP as substrates and producing inorganic pyrophosphate. tRNA 3'-terminal CCA addition is required both for tRNA processing and repair. Also involved in tRNA surveillance by mediating tandem CCA addition to generate a CCACCA at the 3' terminus of unstable tRNAs. While stable tRNAs receive only 3'-terminal CCA, unstable tRNAs are marked with CCACCA and rapidly degraded. The chain is CCA-adding enzyme from Streptococcus pyogenes serotype M4 (strain MGAS10750).